Reading from the N-terminus, the 486-residue chain is Protein nucleotidyltransferase YdiU (486 aa).

Residues Gly90, Gly92, Arg93, Lys113, Asp125, Gly126, Arg176, and Arg183 each contribute to the ATP site. Asp252 acts as the Proton acceptor in catalysis. The Mg(2+) site is built by Asn253 and Asp262. ATP is bound at residue Asp262.

The protein belongs to the SELO family. Mg(2+) is required as a cofactor. It depends on Mn(2+) as a cofactor.

The catalysed reaction is L-seryl-[protein] + ATP = 3-O-(5'-adenylyl)-L-seryl-[protein] + diphosphate. The enzyme catalyses L-threonyl-[protein] + ATP = 3-O-(5'-adenylyl)-L-threonyl-[protein] + diphosphate. It catalyses the reaction L-tyrosyl-[protein] + ATP = O-(5'-adenylyl)-L-tyrosyl-[protein] + diphosphate. It carries out the reaction L-histidyl-[protein] + UTP = N(tele)-(5'-uridylyl)-L-histidyl-[protein] + diphosphate. The catalysed reaction is L-seryl-[protein] + UTP = O-(5'-uridylyl)-L-seryl-[protein] + diphosphate. The enzyme catalyses L-tyrosyl-[protein] + UTP = O-(5'-uridylyl)-L-tyrosyl-[protein] + diphosphate. In terms of biological role, nucleotidyltransferase involved in the post-translational modification of proteins. It can catalyze the addition of adenosine monophosphate (AMP) or uridine monophosphate (UMP) to a protein, resulting in modifications known as AMPylation and UMPylation. The chain is Protein nucleotidyltransferase YdiU from Pseudomonas putida (strain ATCC 47054 / DSM 6125 / CFBP 8728 / NCIMB 11950 / KT2440).